A 910-amino-acid chain; its full sequence is Protein translocase subunit SecA (910 aa).

ATP contacts are provided by residues Gln-86, 104-108 (GEGKT), and Asp-499. Positions 894, 896, 905, and 906 each coordinate Zn(2+).

Belongs to the SecA family. In terms of assembly, monomer and homodimer. Part of the essential Sec protein translocation apparatus which comprises SecA, SecYEG and auxiliary proteins SecDF-YajC and YidC. Zn(2+) serves as cofactor.

Its subcellular location is the cell inner membrane. It localises to the cytoplasm. The catalysed reaction is ATP + H2O + cellular proteinSide 1 = ADP + phosphate + cellular proteinSide 2.. In terms of biological role, part of the Sec protein translocase complex. Interacts with the SecYEG preprotein conducting channel. Has a central role in coupling the hydrolysis of ATP to the transfer of proteins into and across the cell membrane, serving both as a receptor for the preprotein-SecB complex and as an ATP-driven molecular motor driving the stepwise translocation of polypeptide chains across the membrane. In Rickettsia bellii (strain OSU 85-389), this protein is Protein translocase subunit SecA.